A 266-amino-acid chain; its full sequence is Eukaryotic translation initiation factor 3 subunit J (266 aa).

Disordered regions lie at residues 1-142 (MAPS…VSDS) and 215-243 (MSNE…VSLV). A compositionally biased stretch (acidic residues) spans 26 to 44 (DEEEEDVLDSWDAAEDSEV). A coiled-coil region spans residues 40-99 (EDSEVEREKAAKAAEAKAKAEAEAAAKKKSKAQRIQEHKEERKKREEEDSSSESEEDEAE). Composition is skewed to basic and acidic residues over residues 45-65 (EREK…EAAA) and 73-86 (RIQE…KREE). The span at 87-97 (EDSSSESEEDE) shows a compositional bias: acidic residues. 2 stretches are compositionally biased toward basic and acidic residues: residues 98 to 118 (AERR…HAED) and 218 to 230 (EKMR…DKGN).

This sequence belongs to the eIF-3 subunit J family. In terms of assembly, component of the eukaryotic translation initiation factor 3 (eIF-3) complex.

It localises to the cytoplasm. Functionally, component of the eukaryotic translation initiation factor 3 (eIF-3) complex, which is involved in protein synthesis of a specialized repertoire of mRNAs and, together with other initiation factors, stimulates binding of mRNA and methionyl-tRNAi to the 40S ribosome. The eIF-3 complex specifically targets and initiates translation of a subset of mRNAs involved in cell proliferation. The protein is Eukaryotic translation initiation factor 3 subunit J (hcr1) of Aspergillus terreus (strain NIH 2624 / FGSC A1156).